A 470-amino-acid chain; its full sequence is MNPNQKIITIGSVSLGLVVLNILLHIVSITITVLVLPGNGNNGSCNETVIREYNETVRIEKIIQWHNTNVIEYIERPESDHFMNNTEPLCDAKGFAPFSKDNGIRIGSRGHVFVIREPFVSCSPTECRTFFLTQGSLLNDKHSNGTVKDRSPYRTLMSVEIGQSPNVYQARFEAVAWSATACHDGKKWMTIGVTGPDAKAVAVVHYGGIPTDVINSWAGDILRTQESSCTCIQGECYWVMTDGPANRQAQYRAFKAKQGKIIGQTEISFNGGHIEECSCYPNEGKVECVCRDNWTGTNRPVLVISSDLSYRVGYLCAGLPSDTPRGEDSQFTGSCTSPMGNQGYGVKGFGFRQGNDVWMGRTISRTSRSGFEILKVRNGWIQNSKEQIKRQVVVDNLNWSGYSGSFTLPVELTRRNCLVPCFWVEMIRGKPEEKTIWTSSSSIVMCGVDHEIADWSWHDGAILPFDIDKM.

The Intravirion segment spans residues 1–14; sequence MNPNQKIITIGSVS. The interval 11 to 32 is involved in apical transport and lipid raft association; the sequence is GSVSLGLVVLNILLHIVSITIT. The chain crosses the membrane as a helical span at residues 15 to 35; it reads LGLVVLNILLHIVSITITVLV. Residues 32-86 are hypervariable stalk region; that stretch reads TVLVLPGNGNNGSCNETVIREYNETVRIEKIIQWHNTNVIEYIERPESDHFMNNT. At 36–470 the chain is on the virion surface side; it reads LPGNGNNGSC…AILPFDIDKM (435 aa). Residues asparagine 42, asparagine 46, asparagine 54, and asparagine 84 are each glycosylated (N-linked (GlcNAc...) asparagine; by host). Residues 89-470 form a head of neuraminidase region; it reads LCDAKGFAPF…AILPFDIDKM (382 aa). 8 cysteine pairs are disulfide-bonded: cysteine 90-cysteine 417, cysteine 122-cysteine 127, cysteine 182-cysteine 229, cysteine 231-cysteine 236, cysteine 277-cysteine 290, cysteine 279-cysteine 288, cysteine 316-cysteine 335, and cysteine 421-cysteine 446. Arginine 116 provides a ligand contact to substrate. Asparagine 144 carries N-linked (GlcNAc...) asparagine; by host glycosylation. Aspartate 149 acts as the Proton donor/acceptor in catalysis. A substrate-binding site is contributed by arginine 150. 275–276 lines the substrate pocket; sequence EE. Residue arginine 291 participates in substrate binding. Aspartate 292 is a Ca(2+) binding site. Residue asparagine 293 is glycosylated (N-linked (GlcNAc...) asparagine; by host). Residues glycine 296 and aspartate 322 each coordinate Ca(2+). Arginine 368 is a substrate binding site. Asparagine 398 carries an N-linked (GlcNAc...) asparagine; by host glycan. The active-site Nucleophile is the tyrosine 402.

Belongs to the glycosyl hydrolase 34 family. In terms of assembly, homotetramer. Ca(2+) serves as cofactor. Post-translationally, N-glycosylated.

The protein localises to the virion membrane. Its subcellular location is the host apical cell membrane. The catalysed reaction is Hydrolysis of alpha-(2-&gt;3)-, alpha-(2-&gt;6)-, alpha-(2-&gt;8)- glycosidic linkages of terminal sialic acid residues in oligosaccharides, glycoproteins, glycolipids, colominic acid and synthetic substrates.. With respect to regulation, inhibited by the neuraminidase inhibitors zanamivir (Relenza) and oseltamivir (Tamiflu). These drugs interfere with the release of progeny virus from infected cells and are effective against all influenza strains. Resistance to neuraminidase inhibitors is quite rare. Its function is as follows. Catalyzes the removal of terminal sialic acid residues from viral and cellular glycoconjugates. Cleaves off the terminal sialic acids on the glycosylated HA during virus budding to facilitate virus release. Additionally helps virus spread through the circulation by further removing sialic acids from the cell surface. These cleavages prevent self-aggregation and ensure the efficient spread of the progeny virus from cell to cell. Otherwise, infection would be limited to one round of replication. Described as a receptor-destroying enzyme because it cleaves a terminal sialic acid from the cellular receptors. May facilitate viral invasion of the upper airways by cleaving the sialic acid moieties on the mucin of the airway epithelial cells. Likely to plays a role in the budding process through its association with lipid rafts during intracellular transport. May additionally display a raft-association independent effect on budding. Plays a role in the determination of host range restriction on replication and virulence. Sialidase activity in late endosome/lysosome traffic seems to enhance virus replication. The polypeptide is Neuraminidase (Influenza A virus (strain A/Turkey/Canada/1963 H6N8)).